Reading from the N-terminus, the 59-residue chain is Embryonic testis differentiation protein homolog A (59 aa).

Basic and acidic residues predominate over residues 1-10; sequence MDKEVPKGSP. The tract at residues 1-25 is disordered; the sequence is MDKEVPKGSPREPALNIKKSDKSFK.

This is Embryonic testis differentiation protein homolog A from Homo sapiens (Human).